A 199-amino-acid polypeptide reads, in one-letter code: uncharacterized protein (199 aa).

This is an uncharacterized protein from Treponema pallidum (strain Nichols).